The primary structure comprises 496 residues: Guanosine-5'-triphosphate,3'-diphosphate pyrophosphatase (496 aa).

The protein belongs to the GppA/Ppx family. GppA subfamily.

The catalysed reaction is guanosine 3'-diphosphate 5'-triphosphate + H2O = guanosine 3',5'-bis(diphosphate) + phosphate + H(+). It functions in the pathway purine metabolism; ppGpp biosynthesis; ppGpp from GTP: step 2/2. Catalyzes the conversion of pppGpp to ppGpp. Guanosine pentaphosphate (pppGpp) is a cytoplasmic signaling molecule which together with ppGpp controls the 'stringent response', an adaptive process that allows bacteria to respond to amino acid starvation, resulting in the coordinated regulation of numerous cellular activities. This is Guanosine-5'-triphosphate,3'-diphosphate pyrophosphatase from Aeromonas hydrophila subsp. hydrophila (strain ATCC 7966 / DSM 30187 / BCRC 13018 / CCUG 14551 / JCM 1027 / KCTC 2358 / NCIMB 9240 / NCTC 8049).